Consider the following 404-residue polypeptide: Caspase-1 (404 aa).

Residues 1-91 enclose the CARD domain; the sequence is MADKVLKEKR…YLAGTLGLSA (91 aa). A propeptide spanning residues 1–119 is cleaved from the precursor; that stretch reads MADKVLKEKR…SFPAPQAVQD (119 aa). Residue Lys-134 forms a Glycyl lysine isopeptide (Lys-Gly) (interchain with G-Cter in ubiquitin) linkage. Active-site residues include His-237 and Cys-285. A propeptide spans 298–316 (interdomain linker); it reads SVGVSGNLSLPTTEEFEDD. Ser-302 is modified (phosphoserine).

The protein belongs to the peptidase C14A family. Heterotetramer that consists of two anti-parallel arranged heterodimers, each one formed by a 20 kDa (Caspase-1 subunit p20) and a 10 kDa (Caspase-1 subunit p10) subunit. May be a component of the inflammasome, a protein complex which also includes PYCARD, CARD8 and NLRP2 and whose function would be the activation of pro-inflammatory caspases. Component of the AIM2 PANoptosome complex, a multiprotein complex that drives inflammatory cell death (PANoptosis). Interacts with CARD8; interacts with the released C-terminus of CARD8 which forms an inflammasome and directly activates CASP1 to promote pyroptosis. Both the p10 and p20 subunits interact with MEFV. Interacts with CARD17P/INCA and CARD18. Interacts with SERPINB1; this interaction regulates CASP1 activity. In terms of assembly, heterotetramer that consists of two anti-parallel arranged heterodimers, each one formed by a 20 kDa (Caspase-1 subunit p20) and a 10 kDa (Caspase-1 subunit p10) subunit. Can form a heterodimer with isoform epsilon which then has an inhibitory effect. As to quaternary structure, heterotetramer that consists of two anti-parallel arranged heterodimers, each one formed by a 20 kDa (Caspase-1 subunit p20) and a 10 kDa (Caspase-1 subunit p10) subunit. Can form a heterodimer with Caspase-1 subunit p20 which then has an inhibitory effect. The two subunits are derived from the precursor sequence by an autocatalytic mechanism. Post-translationally, ubiquitinated via 'Lys-11'-linked polyubiquitination. Deubiquitinated by USP8. In terms of processing, cleavage in the interdomain linker region is required to induce pyroptosis. Expressed in larger amounts in spleen and lung. Detected in liver, heart, small intestine, colon, thymus, prostate, skeletal muscle, peripheral blood leukocytes, kidney and testis. No expression in the brain.

It localises to the cytoplasm. The protein localises to the cell membrane. The enzyme catalyses Strict requirement for an Asp residue at position P1 and has a preferred cleavage sequence of Tyr-Val-Ala-Asp-|-.. (Microbial infection) Specifically inhibited by the cowpox virus Crma protein. Functionally, thiol protease involved in a variety of inflammatory processes by proteolytically cleaving other proteins, such as the precursors of the inflammatory cytokines interleukin-1 beta (IL1B) and interleukin 18 (IL18) as well as the pyroptosis inducer Gasdermin-D (GSDMD), into active mature peptides. Plays a key role in cell immunity as an inflammatory response initiator: once activated through formation of an inflammasome complex, it initiates a pro-inflammatory response through the cleavage of the two inflammatory cytokines IL1B and IL18, releasing the mature cytokines which are involved in a variety of inflammatory processes. Cleaves a tetrapeptide after an Asp residue at position P1. Also initiates pyroptosis, a programmed lytic cell death pathway, through cleavage of GSDMD. In contrast to cleavage of interleukin IL1B, recognition and cleavage of GSDMD is not strictly dependent on the consensus cleavage site but depends on an exosite interface on CASP1 that recognizes and binds the Gasdermin-D, C-terminal (GSDMD-CT) part. Cleaves and activates CASP7 in response to bacterial infection, promoting plasma membrane repair. Upon inflammasome activation, during DNA virus infection but not RNA virus challenge, controls antiviral immunity through the cleavage of CGAS, rendering it inactive. In apoptotic cells, cleaves SPHK2 which is released from cells and remains enzymatically active extracellularly. In terms of biological role, apoptosis inactive. In Homo sapiens (Human), this protein is Caspase-1 (CASP1).